A 125-amino-acid chain; its full sequence is uncharacterized protein (125 aa).

This is an uncharacterized protein from Saccharomyces cerevisiae (strain ATCC 204508 / S288c) (Baker's yeast).